The chain runs to 208 residues: Small ribosomal subunit protein uS4A (208 aa).

Positions 98–159 (SRLDNVAYNM…HAKSYLRIKA (62 aa)) constitute an S4 RNA-binding domain.

The protein belongs to the universal ribosomal protein uS4 family. In terms of assembly, part of the 30S ribosomal subunit. Contacts protein S5. The interaction surface between S4 and S5 is involved in control of translational fidelity.

One of the primary rRNA binding proteins, it binds directly to 16S rRNA where it nucleates assembly of the body of the 30S subunit. Its function is as follows. With S5 and S12 plays an important role in translational accuracy. This Nitrosomonas europaea (strain ATCC 19718 / CIP 103999 / KCTC 2705 / NBRC 14298) protein is Small ribosomal subunit protein uS4A (rpsD1).